The primary structure comprises 634 residues: Mediator of RNA polymerase II transcription subunit 17 (634 aa).

Disordered regions lie at residues Asp51–Thr73 and Asp606–Gly626. Positions Arg611 to Gly623 are enriched in polar residues.

Belongs to the Mediator complex subunit 17 family. As to quaternary structure, component of the Mediator complex.

It localises to the nucleus. Functionally, component of the Mediator complex, a coactivator involved in the regulated transcription of nearly all RNA polymerase II-dependent genes. Mediator functions as a bridge to convey information from gene-specific regulatory proteins to the basal RNA polymerase II transcription machinery. Mediator is recruited to promoters by direct interactions with regulatory proteins and serves as a scaffold for the assembly of a functional preinitiation complex with RNA polymerase II and the general transcription factors. This chain is Mediator of RNA polymerase II transcription subunit 17 (srb4), found in Aspergillus terreus (strain NIH 2624 / FGSC A1156).